A 328-amino-acid polypeptide reads, in one-letter code: UPF0194 membrane protein YPA_1093 (328 aa).

An N-terminal signal peptide occupies residues 1-22 (MNRKKIIVAAVIVALLATLAYG). Coiled coils occupy residues 80 to 109 (YLNA…REEE) and 141 to 209 (KAVS…ILLA).

The protein belongs to the UPF0194 family.

It localises to the periplasm. In Yersinia pestis bv. Antiqua (strain Antiqua), this protein is UPF0194 membrane protein YPA_1093.